Reading from the N-terminus, the 270-residue chain is MSVPIDRINTVDTLANTLESNLKFFPEKIHFNIRGKLIVIDRVELPILPTTVLALLFPNGFHLLLKHEGGDVSSCFKCHKIDPSICKWILDTYLPLFKKSNNAYPSKIAFNPISNTTLVLFLTECCNIYLFSENKKPVDQKIRSDLLEQTFKNNDVFESADKKKIRKGLSDGPLVDALQHCGFRYNDKWAKRVKEPKLMSLMSYIITTVESSSLSEEFLSKILKLWGQPGNKCWWINEVIKVNGSLINVWRRKQWLLEVTIMGNRENSQD.

It is found in the cytoplasm. This is an uncharacterized protein from Schizosaccharomyces pombe (strain 972 / ATCC 24843) (Fission yeast).